The following is a 486-amino-acid chain: Cysteine--tRNA ligase (486 aa).

Residue Cys-29 participates in Zn(2+) binding. The 'HIGH' region motif lies at Ile-31 to His-41. Zn(2+)-binding residues include Cys-215, His-240, and Glu-244. A 'KMSKS' region motif is present at residues Lys-272–Ser-276. Residue Lys-275 coordinates ATP.

It belongs to the class-I aminoacyl-tRNA synthetase family. As to quaternary structure, monomer. The cofactor is Zn(2+).

Its subcellular location is the cytoplasm. The enzyme catalyses tRNA(Cys) + L-cysteine + ATP = L-cysteinyl-tRNA(Cys) + AMP + diphosphate. This is Cysteine--tRNA ligase from Gloeothece citriformis (strain PCC 7424) (Cyanothece sp. (strain PCC 7424)).